A 328-amino-acid polypeptide reads, in one-letter code: RING finger protein 175 (328 aa).

Transmembrane regions (helical) follow at residues M51–V71, L83–W103, R104–F121, A149–F169, and G180–I200. An RING-type; atypical zinc finger spans residues C227–K277.

The protein resides in the membrane. The polypeptide is RING finger protein 175 (RNF175) (Homo sapiens (Human)).